The chain runs to 201 residues: Sorting nexin-10 (201 aa).

The interval 8 to 125 (EEFVSVWVRD…SLHLFLQSHL (118 aa)) is required for interaction with ATP6V1D. A PX domain is found at 10 to 127 (FVSVWVRDPR…HLFLQSHLNS (118 aa)). A 1,2-diacyl-sn-glycero-3-phospho-(1D-myo-inositol-3-phosphate) is bound by residues arginine 53, lysine 79, and arginine 94. The interval 155–201 (RFPEEEEEGKKDADVEYDSESSSSGLGHSSDDSSSHGCKTSPALQES) is disordered.

This sequence belongs to the sorting nexin family. Interacts with ATP6V1D; may play a role in ciliogenesis. In terms of tissue distribution, expressed in femur, calvariae and teeth.

It localises to the cytoplasm. The protein resides in the endosome membrane. The protein localises to the cytoskeleton. Its subcellular location is the microtubule organizing center. It is found in the centrosome. In terms of biological role, probable phosphoinositide-binding protein involved in protein sorting and membrane trafficking in endosomes. Plays a role in cilium biogenesis through regulation of the transport and the localization of proteins to the cilium. Required for the localization to the cilium of V-ATPase subunit ATP6V1D and ATP6V0D1, and RAB8A. Involved in osteoclast differentiation and therefore bone resorption. The protein is Sorting nexin-10 (Snx10) of Mus musculus (Mouse).